The following is a 1373-amino-acid chain: DNA-directed RNA polymerase subunit beta'' (1373 aa).

Zn(2+)-binding residues include C224, C296, C303, and C306.

It belongs to the RNA polymerase beta' chain family. RpoC2 subfamily. In terms of assembly, in plastids the minimal PEP RNA polymerase catalytic core is composed of four subunits: alpha, beta, beta', and beta''. When a (nuclear-encoded) sigma factor is associated with the core the holoenzyme is formed, which can initiate transcription. It depends on Zn(2+) as a cofactor.

Its subcellular location is the plastid. It localises to the chloroplast. The catalysed reaction is RNA(n) + a ribonucleoside 5'-triphosphate = RNA(n+1) + diphosphate. DNA-dependent RNA polymerase catalyzes the transcription of DNA into RNA using the four ribonucleoside triphosphates as substrates. The protein is DNA-directed RNA polymerase subunit beta'' of Amborella trichopoda.